The primary structure comprises 262 residues: Lipoate-protein ligase A subunit 1 (262 aa).

In terms of domain architecture, BPL/LPL catalytic spans 30–226; sequence YGDKPILRFY…GFSETLHIDF (197 aa). ATP-binding residues include R72, G77, Y80, D85, P132, and K135. Mg(2+)-binding residues include T137 and D138. 3 residues coordinate ATP: K145, A149, and A163. A (R)-lipoate-binding site is contributed by K145. A149 provides a ligand contact to Mg(2+).

This sequence belongs to the LplA family. In terms of assembly, heterodimer composed of LplA and LplB.

It is found in the cytoplasm. It carries out the reaction L-lysyl-[lipoyl-carrier protein] + (R)-lipoate + ATP = N(6)-[(R)-lipoyl]-L-lysyl-[lipoyl-carrier protein] + AMP + diphosphate + H(+). It participates in protein modification; protein lipoylation via exogenous pathway; protein N(6)-(lipoyl)lysine from lipoate: step 1/2. The protein operates within protein modification; protein lipoylation via exogenous pathway; protein N(6)-(lipoyl)lysine from lipoate: step 2/2. Part of a lipoate-protein ligase complex that catalyzes both the ATP-dependent activation of exogenously supplied lipoate to lipoyl-AMP and the transfer of the activated lipoyl onto the lipoyl domains of lipoate-dependent enzymes. Can also use octanoate as substrate. This Thermoplasma acidophilum (strain ATCC 25905 / DSM 1728 / JCM 9062 / NBRC 15155 / AMRC-C165) protein is Lipoate-protein ligase A subunit 1 (lplA).